Reading from the N-terminus, the 915-residue chain is Probable LRR receptor-like serine/threonine-protein kinase At2g16250 (915 aa).

The N-terminal stretch at 1 to 28 (MVDQRRSALGFVLLLLCLVLFFDCVVVG) is a signal peptide. Residues 29 to 451 (QTQSRFSEKL…ISRRTVIILA (423 aa)) are Extracellular-facing. Asparagine 71, asparagine 78, asparagine 101, asparagine 109, asparagine 150, asparagine 158, and asparagine 177 each carry an N-linked (GlcNAc...) asparagine glycan. LRR repeat units lie at residues 102-125 (LTRL…WFGV), 127-150 (LLAL…TLGN), 151-174 (LTSL…SLGQ), 176-198 (LNLS…SFSS), 199-223 (LKNL…LGAL), 225-247 (KLIH…LGDL), 248-271 (VNLV…LRKL), 272-295 (SKLQ…LFSA), 297-320 (SQLQ…CWSL), 321-344 (PKLR…SYDS), and 366-390 (LRRF…VTGE). The N-linked (GlcNAc...) asparagine glycan is linked to asparagine 230. N-linked (GlcNAc...) asparagine glycosylation is present at asparagine 332. N-linked (GlcNAc...) asparagine glycans are attached at residues asparagine 391, asparagine 429, and asparagine 437. A helical membrane pass occupies residues 452–472 (AVGGGVAFILLFVILPIILVL). The Cytoplasmic segment spans residues 473-915 (CMRHRRRAAQ…AAYGVVEDNL (443 aa)). A disordered region spans residues 482 to 503 (QRGNNDRPKPAGEASQQPPKGA). A Protein kinase domain is found at 527-811 (FNDANLIKRG…IVNALENPLK (285 aa)). ATP is bound by residues 533–541 (IKRGHSGNL) and lysine 555. Aspartate 657 serves as the catalytic Proton acceptor. Residues 851-915 (TAVQAGATTS…AAYGVVEDNL (65 aa)) are disordered. Over residues 859-870 (TSGGGGGGGGNG) the composition is skewed to gly residues. Residues 871-892 (LRNSGSQGSSGRNNNNNGNSSS) are compositionally biased toward low complexity.

This sequence belongs to the protein kinase superfamily. Ser/Thr protein kinase family.

The protein resides in the membrane. It catalyses the reaction L-seryl-[protein] + ATP = O-phospho-L-seryl-[protein] + ADP + H(+). The catalysed reaction is L-threonyl-[protein] + ATP = O-phospho-L-threonyl-[protein] + ADP + H(+). In Arabidopsis thaliana (Mouse-ear cress), this protein is Probable LRR receptor-like serine/threonine-protein kinase At2g16250.